A 91-amino-acid chain; its full sequence is Small ribosomal subunit protein uS19 (91 aa).

Belongs to the universal ribosomal protein uS19 family.

Functionally, protein S19 forms a complex with S13 that binds strongly to the 16S ribosomal RNA. In Pseudomonas paraeruginosa (strain DSM 24068 / PA7) (Pseudomonas aeruginosa (strain PA7)), this protein is Small ribosomal subunit protein uS19.